Consider the following 355-residue polypeptide: uncharacterized protein (355 aa).

An N-terminal signal peptide occupies residues 1 to 21; sequence MQKKVLFNDIVFVCFPITDNG. Residues N20, N78, N87, N156, N159, and N274 are each glycosylated (N-linked (GlcNAc...) asparagine; by host). Topologically, residues 22 to 331 are virion surface; it reads SIIISDIGYS…SSTSFFSRYG (310 aa). The interval 288 to 317 is disordered; sequence GSKSTPNGPNGPTPTPSNGPNGPTPVPGIP. Residues 296–317 are compositionally biased toward pro residues; sequence PNGPTPTPSNGPNGPTPVPGIP. A glycan (N-linked (GlcNAc...) asparagine; by host) is linked at N320. Residues 332–352 form a helical membrane-spanning segment; the sequence is LWIIIAIILLIVIISAVGIYF. At 353–355 the chain is on the intravirion side; sequence YLR.

The protein resides in the host membrane. It is found in the virion. This is an uncharacterized protein from Acanthamoeba polyphaga mimivirus (APMV).